A 148-amino-acid chain; its full sequence is MADEEIRHLVRIMNTDLQGKKPVKYALTGIRGIGLRTSRVIVDSTGIDPNAVIGYLSDEDIKKLDSTIDKFEEQLPKWMLNRQFDPLTGENKHLLGQDIILTLKEDLNDLKKSRAYRGLRHERGLKVRGQRTKSTGRRGSTIGVRKKK.

The interval 128–148 is disordered; that stretch reads RGQRTKSTGRRGSTIGVRKKK.

The protein belongs to the universal ribosomal protein uS13 family. Part of the 30S ribosomal subunit. Forms a loose heterodimer with protein S19. Forms two bridges to the 50S subunit in the 70S ribosome.

Located at the top of the head of the 30S subunit, it contacts several helices of the 16S rRNA. In the 70S ribosome it contacts the 23S rRNA (bridge B1a) and protein L5 of the 50S subunit (bridge B1b), connecting the 2 subunits; these bridges are implicated in subunit movement. The polypeptide is Small ribosomal subunit protein uS13 (Methanococcoides burtonii (strain DSM 6242 / NBRC 107633 / OCM 468 / ACE-M)).